The following is a 391-amino-acid chain: 3-ketoacyl-CoA thiolase (391 aa).

The active-site Acyl-thioester intermediate is the Cys-95. Catalysis depends on proton acceptor residues His-347 and Cys-377.

Belongs to the thiolase-like superfamily. Thiolase family. As to quaternary structure, heterotetramer of two alpha chains (FadB) and two beta chains (FadA).

Its subcellular location is the cytoplasm. The enzyme catalyses an acyl-CoA + acetyl-CoA = a 3-oxoacyl-CoA + CoA. The protein operates within lipid metabolism; fatty acid beta-oxidation. Catalyzes the final step of fatty acid oxidation in which acetyl-CoA is released and the CoA ester of a fatty acid two carbons shorter is formed. This chain is 3-ketoacyl-CoA thiolase, found in Saccharophagus degradans (strain 2-40 / ATCC 43961 / DSM 17024).